Here is a 190-residue protein sequence, read N- to C-terminus: Adenylate kinase (190 aa).

12-17 (GSGKTT) lines the ATP pocket. Positions 34–63 (STGELLRAEVASGSERGKIIEGFTSKGNLV) are NMP. AMP contacts are provided by residues Thr-35, Arg-40, 61–63 (NLV), 88–91 (GYPR), and Gln-95. The tract at residues 130 to 136 (GRARGAD) is LID. Arg-131 lines the ATP pocket. The AMP site is built by Arg-133 and Arg-145. Arg-173 is a binding site for ATP.

It belongs to the adenylate kinase family. In terms of assembly, monomer.

It is found in the cytoplasm. The enzyme catalyses AMP + ATP = 2 ADP. It participates in purine metabolism; AMP biosynthesis via salvage pathway; AMP from ADP: step 1/1. In terms of biological role, catalyzes the reversible transfer of the terminal phosphate group between ATP and AMP. Plays an important role in cellular energy homeostasis and in adenine nucleotide metabolism. This Wolinella succinogenes (strain ATCC 29543 / DSM 1740 / CCUG 13145 / JCM 31913 / LMG 7466 / NCTC 11488 / FDC 602W) (Vibrio succinogenes) protein is Adenylate kinase.